A 215-amino-acid polypeptide reads, in one-letter code: 3-demethoxyubiquinol 3-hydroxylase (215 aa).

Residues Glu64, Glu94, His97, Glu146, Glu178, and His181 each coordinate Fe cation.

It belongs to the COQ7 family. Fe cation is required as a cofactor.

It is found in the cell membrane. The catalysed reaction is a 5-methoxy-2-methyl-3-(all-trans-polyprenyl)benzene-1,4-diol + AH2 + O2 = a 3-demethylubiquinol + A + H2O. It functions in the pathway cofactor biosynthesis; ubiquinone biosynthesis. In terms of biological role, catalyzes the hydroxylation of 2-nonaprenyl-3-methyl-6-methoxy-1,4-benzoquinol during ubiquinone biosynthesis. The protein is 3-demethoxyubiquinol 3-hydroxylase of Pseudomonas putida (strain W619).